The sequence spans 461 residues: Ribonuclease inhibitor (461 aa).

Residue Ser-2 is modified to N-acetylserine. Positions Ser-2–Gln-11 are 2 X 5 AA tandem repeats of S-L-D-I-Q. LRR repeat units lie at residues Trp-20–Ile-48, Ser-49–Val-76, Leu-77–Leu-105, Ser-106–Leu-133, Cys-134–Leu-162, Ala-163–Leu-190, Cys-191–Leu-219, Cys-220–Leu-247, Cys-248–Leu-276, Cys-277–Leu-304, Cys-305–Phe-333, Ser-334–Leu-361, Cys-362–Leu-390, Ala-391–Leu-418, and Val-419–Leu-447. Ser-91 is subject to Phosphoserine.

In terms of assembly, forms high-affinity heterodimers with RNASE1, ANG and RNASE2.

It localises to the cytoplasm. The protein localises to the nucleus. Functionally, ribonuclease inhibitor which inhibits RNASE1, RNASE2 and angiogenin (ANG). May play a role in redox homeostasis. Required to inhibit the cytotoxic tRNA ribonuclease activity of ANG in the cytoplasm in absence of stress. Relocates to the nucleus in response to stress, relieving inhibition of ANG in the cytoplasm, and inhibiting the angiogenic activity of ANG in the nucleus. The protein is Ribonuclease inhibitor (RNH1) of Pan troglodytes (Chimpanzee).